The primary structure comprises 459 residues: Argininosuccinate lyase (459 aa).

This sequence belongs to the lyase 1 family. Argininosuccinate lyase subfamily.

It is found in the cytoplasm. The catalysed reaction is 2-(N(omega)-L-arginino)succinate = fumarate + L-arginine. Its pathway is amino-acid biosynthesis; L-arginine biosynthesis; L-arginine from L-ornithine and carbamoyl phosphate: step 3/3. This chain is Argininosuccinate lyase, found in Staphylococcus saprophyticus subsp. saprophyticus (strain ATCC 15305 / DSM 20229 / NCIMB 8711 / NCTC 7292 / S-41).